The following is a 1747-amino-acid chain: E3 ubiquitin-protein ligase listerin (1747 aa).

Residues Met1 to Ala24 are disordered. Positions Ala8–Ala24 are enriched in polar residues. HEAT repeat units lie at residues Ala65–Val102, Lys106–Lys144, Asn346–Gln383, Asn424–Glu461, and Lys508–Ser547. Ser566 bears the Phosphoserine mark. HEAT repeat units follow at residues Ser612 to Gln653, Glu664 to Ala711, Ser789 to Pro825, Leu952 to Asp989, Lys1005 to Leu1042, Gly1053 to Gln1090, Lys1129 to Gly1166, Val1216 to Gln1258, Val1269 to Lys1307, Phe1330 to Ile1363, Thr1364 to Ala1400, and Glu1500 to Arg1539. The RING-type zinc finger occupies Cys1697–Arg1744.

This sequence belongs to the LTN1 family. As to quaternary structure, component of the ribosome quality control complex (RQC), composed of at least the E3 ubiquitin ligase l(3)76BDr/LTN1 and Clbn/NEMF. The complex probably also contains TCF25 as well as TER94/VCP and its ubiquitin-binding cofactors. RQC forms a stable complex with 60S ribosomal subunits.

Its subcellular location is the cytoplasm. It is found in the cytosol. The catalysed reaction is S-ubiquitinyl-[E2 ubiquitin-conjugating enzyme]-L-cysteine + [acceptor protein]-L-lysine = [E2 ubiquitin-conjugating enzyme]-L-cysteine + N(6)-ubiquitinyl-[acceptor protein]-L-lysine.. Its pathway is protein modification; protein ubiquitination. Functionally, E3 ubiquitin-protein ligase component of the ribosome quality control complex (RQC), a ribosome-associated complex that mediates ubiquitination and extraction of incompletely synthesized nascent chains for proteasomal degradation. Ubiquitination leads to TER94/VCP recruitment for extraction and degradation of the incomplete translation product. This Drosophila melanogaster (Fruit fly) protein is E3 ubiquitin-protein ligase listerin.